A 217-amino-acid polypeptide reads, in one-letter code: Proteasome subunit beta type-9 (217 aa).

A propeptide spans 1-18 (MLGEEAEPQWISEEVKTG) (removed in mature form). The active-site Nucleophile is the T19.

Belongs to the peptidase T1B family. In terms of assembly, the 26S proteasome consists of a 20S proteasome core and two 19S regulatory subunits. The 20S proteasome core is composed of 28 subunits that are arranged in four stacked rings, resulting in a barrel-shaped structure. The two end rings are each formed by seven alpha subunits, and the two central rings are each formed by seven beta subunits. The catalytic chamber with the active sites is on the inside of the barrel. Component of the immunoproteasome, where it displaces the equivalent housekeeping subunit PSMB6. Autocleaved. The resulting N-terminal Thr residue of the mature subunit is responsible for the nucleophile proteolytic activity.

It is found in the cytoplasm. The protein resides in the nucleus. It catalyses the reaction Cleavage of peptide bonds with very broad specificity.. The proteasome is a multicatalytic proteinase complex which is characterized by its ability to cleave peptides with Arg, Phe, Tyr, Leu, and Glu adjacent to the leaving group at neutral or slightly basic pH. The proteasome has an ATP-dependent proteolytic activity. This subunit is involved in antigen processing to generate class I binding peptides. The protein is Proteasome subunit beta type-9 (psmb9) of Oryzias latipes (Japanese rice fish).